The primary structure comprises 227 residues: Cleavage and polyadenylation specificity factor subunit 5 (227 aa).

The Nudix hydrolase domain maps to 76–201 (MRRTVEGVLI…KLVAAPLFEL (126 aa)). Residues 102–104 (TFF) form an interaction with RNA region. Positions 109-130 (GELNPGEDEVEGLKRLMTEILG) match the Nudix box motif.

Belongs to the Nudix hydrolase family. CPSF5 subfamily. In terms of assembly, homodimer (via N- and C-terminus); binds RNA as homodimer. Component of the cleavage factor Im (CFIm) complex.

It localises to the nucleus. The protein localises to the cytoplasm. Functionally, component of the cleavage factor Im (CFIm) complex that functions as an activator of the pre-mRNA 3'-end cleavage and polyadenylation processing required for the maturation of pre-mRNA into functional mRNAs. CFIm contributes to the recruitment of multiprotein complexes on specific sequences on the pre-mRNA 3'-end, so called cleavage and polyadenylation signals (pA signals). Most pre-mRNAs contain multiple pA signals, resulting in alternative cleavage and polyadenylation (APA) producing mRNAs with variable 3'-end formation. The CFIm complex acts as a key regulator of cleavage and polyadenylation site choice during APA through its binding to 5'-UGUA-3' elements localized in the 3'-untranslated region (UTR) for a huge number of pre-mRNAs. Binds to 5'-UGUA-3' elements localized upstream of pA signals that act as enhancers of pre-mRNA 3'-end processing. The homodimer mediates simultaneous sequence-specific recognition of two 5'-UGUA-3' elements within the pre-mRNA. Plays a role in somatic cell fate transitions and pluripotency by regulating widespread changes in gene expression through an APA-dependent function. Binds to chromatin. Binds to, but does not hydrolyze mono- and di-adenosine nucleotides. The polypeptide is Cleavage and polyadenylation specificity factor subunit 5 (Xenopus laevis (African clawed frog)).